The following is a 1755-amino-acid chain: Transposon Ty1-LR3 Gag-Pol polyprotein (1755 aa).

The segment covering 1–16 (MESQQLSQHSHISHGS) has biased composition (low complexity). Disordered stretches follow at residues 1–93 (MESQ…MMTQ), 126–173 (PQSQ…RPPP), and 352–421 (GSRN…SKST). Polar residues-rich tracts occupy residues 48–60 (TKAN…TPAS) and 127–152 (QSQF…GNTF). Over residues 153–165 (TDSSSADSDMTST) the composition is skewed to low complexity. The segment at 299–401 (NNGIHINNKV…NSKSKTARAH (103 aa)) is RNA-binding. The segment covering 402 to 418 (NVSTSNNSPSTDNDSIS) has biased composition (low complexity). S416 carries the phosphoserine modification. D461 functions as the For protease activity; shared with dimeric partner in the catalytic mechanism. Positions 583-640 (NVHTSESTRKYPYPFIHRMLAHANAQTIRYSLKNNTITYFNESDVDWSSAIDYQCPDC) are integrase-type zinc finger-like. Residues 660-829 (NSYEPFQYLH…SQHAGLAGLD (170 aa)) enclose the Integrase catalytic domain. Residues D671 and D736 each contribute to the Mg(2+) site. Disordered regions lie at residues 956–1087 (SKAV…ETEK), 1092–1111 (RSPS…NIVP), and 1129–1172 (ADLP…SNAY). Over residues 960 to 969 (SPTDSTPPST) the composition is skewed to low complexity. Over residues 1005–1015 (STPQISNIEST) the composition is skewed to polar residues. Residues 1038–1052 (ESSHASKSKDFRHSD) are compositionally biased toward basic and acidic residues. Composition is skewed to polar residues over residues 1053–1082 (SYSN…QISD) and 1101–1111 (PENNSSHNIVP). Residues 1178–1212 (KKRSLEDNETEIKVSRDTWNTKNMRSLEPPRSKKR) carry the Bipartite nuclear localization signal motif. One can recognise a Reverse transcriptase Ty1/copia-type domain in the interval 1338–1476 (NNYYITQLDI…DILGLEIKYQ (139 aa)). Residues D1346, D1427, D1428, D1610, E1652, and D1685 each coordinate Mg(2+). The RNase H Ty1/copia-type domain maps to 1610-1752 (DASYGNQPYY…IKTFKLLTNK (143 aa)).

The capsid protein forms a homotrimer, from which the VLPs are assembled. The protease is a homodimer, whose active site consists of two apposed aspartic acid residues. Initially, virus-like particles (VLPs) are composed of the structural unprocessed proteins Gag and Gag-Pol, and also contain the host initiator methionine tRNA (tRNA(i)-Met) which serves as a primer for minus-strand DNA synthesis, and a dimer of genomic Ty RNA. Processing of the polyproteins occurs within the particle and proceeds by an ordered pathway, called maturation. First, the protease (PR) is released by autocatalytic cleavage of the Gag-Pol polyprotein yielding capsid protein p45 and a Pol-p154 precursor protein. This cleavage is a prerequisite for subsequent processing of Pol-p154 at the remaining sites to release the mature structural and catalytic proteins. Maturation takes place prior to the RT reaction and is required to produce transposition-competent VLPs.

The protein localises to the cytoplasm. It localises to the nucleus. The catalysed reaction is DNA(n) + a 2'-deoxyribonucleoside 5'-triphosphate = DNA(n+1) + diphosphate. It catalyses the reaction Endonucleolytic cleavage to 5'-phosphomonoester.. Its function is as follows. Capsid protein (CA) is the structural component of the virus-like particle (VLP), forming the shell that encapsulates the retrotransposons dimeric RNA genome. The particles are assembled from trimer-clustered units and there are holes in the capsid shells that allow for the diffusion of macromolecules. CA also has nucleocapsid-like chaperone activity, promoting primer tRNA(i)-Met annealing to the multipartite primer-binding site (PBS), dimerization of Ty1 RNA and initiation of reverse transcription. The aspartyl protease (PR) mediates the proteolytic cleavages of the Gag and Gag-Pol polyproteins after assembly of the VLP. Functionally, reverse transcriptase/ribonuclease H (RT) is a multifunctional enzyme that catalyzes the conversion of the retro-elements RNA genome into dsDNA within the VLP. The enzyme displays a DNA polymerase activity that can copy either DNA or RNA templates, and a ribonuclease H (RNase H) activity that cleaves the RNA strand of RNA-DNA heteroduplexes during plus-strand synthesis and hydrolyzes RNA primers. The conversion leads to a linear dsDNA copy of the retrotransposon that includes long terminal repeats (LTRs) at both ends. In terms of biological role, integrase (IN) targets the VLP to the nucleus, where a subparticle preintegration complex (PIC) containing at least integrase and the newly synthesized dsDNA copy of the retrotransposon must transit the nuclear membrane. Once in the nucleus, integrase performs the integration of the dsDNA into the host genome. This Saccharomyces cerevisiae (strain ATCC 204508 / S288c) (Baker's yeast) protein is Transposon Ty1-LR3 Gag-Pol polyprotein (TY1B-LR3).